The chain runs to 645 residues: Acetyl-coenzyme A synthetase (645 aa).

CoA contacts are provided by residues 190 to 193 and threonine 309; that span reads RGGR. ATP is bound by residues 385 to 387, 409 to 414, aspartate 498, and arginine 513; these read GEP and DTWWQT. Serine 521 contributes to the CoA binding site. Arginine 524 serves as a coordination point for ATP. Residues valine 535, histidine 537, and valine 540 each coordinate Mg(2+). Arginine 582 provides a ligand contact to CoA. Lysine 607 carries the N6-acetyllysine modification.

The protein belongs to the ATP-dependent AMP-binding enzyme family. The cofactor is Mg(2+). In terms of processing, acetylated. Deacetylation by the SIR2-homolog deacetylase activates the enzyme.

The enzyme catalyses acetate + ATP + CoA = acetyl-CoA + AMP + diphosphate. Catalyzes the conversion of acetate into acetyl-CoA (AcCoA), an essential intermediate at the junction of anabolic and catabolic pathways. AcsA undergoes a two-step reaction. In the first half reaction, AcsA combines acetate with ATP to form acetyl-adenylate (AcAMP) intermediate. In the second half reaction, it can then transfer the acetyl group from AcAMP to the sulfhydryl group of CoA, forming the product AcCoA. This chain is Acetyl-coenzyme A synthetase, found in Methylocella silvestris (strain DSM 15510 / CIP 108128 / LMG 27833 / NCIMB 13906 / BL2).